Here is an 800-residue protein sequence, read N- to C-terminus: Transducin beta-like protein 3 (800 aa).

Position 2 is an N-acetylalanine (Ala2). WD repeat units lie at residues 64–105 (EDQE…RLWK), 107–146 (IHTAPVASMAFDATSTLLATGGCDGAVRVWDIVQHYGTHH), 149–190 (GSPG…CLAV), 193–232 (AHYSAVTSLSFSEDGHTMLSSGRDKICIVWDLRSYETSRT), 245–284 (LPEEPALALGVKNSGLHFLTAGDQGILRVWEAASGQCVYT), 290–329 (GLRQELTHCTLARAAGLLLTVTADHNLLLYEARSLQLQKQ), 332–372 (GYSE…CQIL), 374–413 (GHTDIVLALDVFRKGWLFASCAKDQSIRIWRMNKAGQVAC), 419–459 (GHTH…PSKN), 477–516 (CHDKDINSLAVSPNDKLLATGSQDRTAKLWALPQCQLLGV), 519–560 (GHRR…KTFE), 562–602 (HDAS…RTLD), and 604–642 (HEDKVWGLHCSRLDDHAITGGSDSRIILWKDVTEAEQAE). Residue Lys407 forms a Glycyl lysine isopeptide (Lys-Gly) (interchain with G-Cter in SUMO2) linkage.

Part of the small subunit (SSU) processome, composed of more than 70 proteins and the RNA chaperone small nucleolar RNA (snoRNA) U3.

The protein localises to the nucleus. It localises to the nucleolus. In terms of biological role, part of the small subunit (SSU) processome, first precursor of the small eukaryotic ribosomal subunit. During the assembly of the SSU processome in the nucleolus, many ribosome biogenesis factors, an RNA chaperone and ribosomal proteins associate with the nascent pre-rRNA and work in concert to generate RNA folding, modifications, rearrangements and cleavage as well as targeted degradation of pre-ribosomal RNA by the RNA exosome. In Rattus norvegicus (Rat), this protein is Transducin beta-like protein 3 (Tbl3).